The following is a 1104-amino-acid chain: Transposon Ty4-P Gag-Pol polyprotein (1104 aa).

The stretch at 48-112 (VKQYQRNLNR…VEKIQLLETN (65 aa)) forms a coiled coil. Positions 381 to 501 (QQQLKSSAKE…KTKMVLSRKY (121 aa)) are ty4 protease. The For protease activity; shared with dimeric partner role is filled by D414. The segment at 539 to 599 (AIKPTSSPGF…EPNEFWCQTC (61 aa)) is integrase-type zinc finger-like. The Integrase catalytic domain maps to 619–786 (TDHEPGSSWC…LPLKAISRQP (168 aa)). D630 and D695 together coordinate Mg(2+).

The protease is a homodimer, whose active site consists of two apposed aspartic acid residues. Post-translationally, proteolytically processed into capsid protein (CA), Ty4 protease (PR), integrase (IN) and reverse transcriptase/ribonuclease H (RT) proteins. Initially, virus-like particles (VLPs) are composed of the structural unprocessed proteins Gag and Gag-Pol, and also contain the host initiator methionine tRNA (tRNA(i)-Met) which serves as a primer for minus-strand DNA synthesis, and a dimer of genomic Ty RNA. Processing of the polyproteins occurs within the particle and proceeds by an ordered pathway, called maturation. First, the protease (PR) is released by autocatalytic cleavage of the Gag-Pol polyprotein, and this cleavage is a prerequisite for subsequent processing at the remaining sites to release the mature structural and catalytic proteins. Maturation takes place prior to the RT reaction and is required to produce transposition-competent VLPs.

The protein localises to the cytoplasm. Its subcellular location is the nucleus. It carries out the reaction DNA(n) + a 2'-deoxyribonucleoside 5'-triphosphate = DNA(n+1) + diphosphate. The catalysed reaction is Endonucleolytic cleavage to 5'-phosphomonoester.. Its function is as follows. Capsid protein (CA) is the structural component of the virus-like particle (VLP), forming the shell that encapsulates the retrotransposons dimeric RNA genome. Functionally, the aspartyl protease (PR) mediates the proteolytic cleavages of the Gag and Gag-Pol polyproteins after assembly of the VLP. In terms of biological role, reverse transcriptase/ribonuclease H (RT) is a multifunctional enzyme that catalyzes the conversion of the retro-elements RNA genome into dsDNA within the VLP. The enzyme displays a DNA polymerase activity that can copy either DNA or RNA templates, and a ribonuclease H (RNase H) activity that cleaves the RNA strand of RNA-DNA heteroduplexes during plus-strand synthesis and hydrolyzes RNA primers. The conversion leads to a linear dsDNA copy of the retrotransposon that includes long terminal repeats (LTRs) at both ends. Integrase (IN) targets the VLP to the nucleus, where a subparticle preintegration complex (PIC) containing at least integrase and the newly synthesized dsDNA copy of the retrotransposon must transit the nuclear membrane. Once in the nucleus, integrase performs the integration of the dsDNA into the host genome. The polypeptide is Transposon Ty4-P Gag-Pol polyprotein (TY4B-P) (Saccharomyces cerevisiae (strain ATCC 204508 / S288c) (Baker's yeast)).